Consider the following 217-residue polypeptide: MITSQMVKELRERTGAGMMDCKRALEEANGDMEKAIEILRQKGLAAAAKKAGRIATEGVVEAYIHGGGRIGVLVEINCETDFVAKTDEFKSFARDIAMQIAAAKPEYVRREDVPQEVIEKEREILRAQALNEGKPANVVEKMVEGRLEKFFKEVCLLEQPFIKNPDITVKDLLTEKIAKIGENINIRRFVRFELGEGLAKKEEDFAAEVAAAMKVNK.

Residues 80–83 (TDFV) are involved in Mg(2+) ion dislocation from EF-Tu.

Belongs to the EF-Ts family.

The protein localises to the cytoplasm. Its function is as follows. Associates with the EF-Tu.GDP complex and induces the exchange of GDP to GTP. It remains bound to the aminoacyl-tRNA.EF-Tu.GTP complex up to the GTP hydrolysis stage on the ribosome. This Carboxydothermus hydrogenoformans (strain ATCC BAA-161 / DSM 6008 / Z-2901) protein is Elongation factor Ts.